Here is a 201-residue protein sequence, read N- to C-terminus: 3-isopropylmalate dehydratase small subunit (201 aa).

This sequence belongs to the LeuD family. LeuD type 1 subfamily. Heterodimer of LeuC and LeuD.

The enzyme catalyses (2R,3S)-3-isopropylmalate = (2S)-2-isopropylmalate. It functions in the pathway amino-acid biosynthesis; L-leucine biosynthesis; L-leucine from 3-methyl-2-oxobutanoate: step 2/4. Functionally, catalyzes the isomerization between 2-isopropylmalate and 3-isopropylmalate, via the formation of 2-isopropylmaleate. In Shigella boydii serotype 18 (strain CDC 3083-94 / BS512), this protein is 3-isopropylmalate dehydratase small subunit.